A 118-amino-acid chain; its full sequence is Large ribosomal subunit protein uL18 (118 aa).

Residues 1 to 24 are disordered; sequence MITKPDKNKIRQKRHRRVRGKLSG. Positions 10–20 are enriched in basic residues; sequence IRQKRHRRVRG.

Belongs to the universal ribosomal protein uL18 family. In terms of assembly, part of the 50S ribosomal subunit; part of the 5S rRNA/L5/L18/L25 subcomplex. Contacts the 5S and 23S rRNAs.

Its function is as follows. This is one of the proteins that bind and probably mediate the attachment of the 5S RNA into the large ribosomal subunit, where it forms part of the central protuberance. In Streptococcus sanguinis (strain SK36), this protein is Large ribosomal subunit protein uL18.